Reading from the N-terminus, the 450-residue chain is ATP-dependent protease ATPase subunit HslU (450 aa).

ATP contacts are provided by residues Ile-18 and 60–65 (GVGKTE). Positions 140–151 (KTSSSGWAQQQE) are enriched in polar residues. A disordered region spans residues 140-162 (KTSSSGWAQQQEETPENDDQRGT). ATP contacts are provided by Asp-263, Glu-328, and Arg-400.

The protein belongs to the ClpX chaperone family. HslU subfamily. As to quaternary structure, a double ring-shaped homohexamer of HslV is capped on each side by a ring-shaped HslU homohexamer. The assembly of the HslU/HslV complex is dependent on binding of ATP.

It is found in the cytoplasm. In terms of biological role, ATPase subunit of a proteasome-like degradation complex; this subunit has chaperone activity. The binding of ATP and its subsequent hydrolysis by HslU are essential for unfolding of protein substrates subsequently hydrolyzed by HslV. HslU recognizes the N-terminal part of its protein substrates and unfolds these before they are guided to HslV for hydrolysis. The protein is ATP-dependent protease ATPase subunit HslU of Idiomarina loihiensis (strain ATCC BAA-735 / DSM 15497 / L2-TR).